Consider the following 194-residue polypeptide: 7-methyl-GTP pyrophosphatase (194 aa).

The active-site Proton acceptor is the D67.

Belongs to the Maf family. YceF subfamily. A divalent metal cation is required as a cofactor.

It is found in the cytoplasm. The enzyme catalyses N(7)-methyl-GTP + H2O = N(7)-methyl-GMP + diphosphate + H(+). Nucleoside triphosphate pyrophosphatase that hydrolyzes 7-methyl-GTP (m(7)GTP). May have a dual role in cell division arrest and in preventing the incorporation of modified nucleotides into cellular nucleic acids. In Pseudoalteromonas atlantica (strain T6c / ATCC BAA-1087), this protein is 7-methyl-GTP pyrophosphatase.